Here is a 278-residue protein sequence, read N- to C-terminus: Ras-related protein rapC (278 aa).

10–17 (GASGTGKT) is a binding site for GTP. Positions 32–40 (YDPTIEDLY) match the Effector region motif. GTP is bound by residues 58–62 (DTSGT) and 119–122 (NKCD). Disordered regions lie at residues 176–209 (NGSSNGKDKKDKKEKKTHKKDSGSNNSSINSSSS) and 236–278 (STSS…CLIM). Composition is skewed to low complexity over residues 198–209 (GSNNSSINSSSS) and 236–251 (STSSTSVNNLNQSQTN). A Cysteine methyl ester modification is found at cysteine 275. Cysteine 275 carries S-geranylgeranyl cysteine lipidation. Residues 276–278 (LIM) constitute a propeptide, removed in mature form.

This sequence belongs to the small GTPase superfamily. Ras family.

The protein localises to the cell membrane. The enzyme catalyses GTP + H2O = GDP + phosphate + H(+). The chain is Ras-related protein rapC (rapC) from Dictyostelium discoideum (Social amoeba).